A 310-amino-acid chain; its full sequence is tRNA-cytidine(32) 2-sulfurtransferase (310 aa).

Residues 47–52 (SGGKDS) carry the PP-loop motif motif. 3 residues coordinate [4Fe-4S] cluster: Cys122, Cys125, and Cys213.

The protein belongs to the TtcA family. In terms of assembly, homodimer. It depends on Mg(2+) as a cofactor. [4Fe-4S] cluster serves as cofactor.

The protein resides in the cytoplasm. It carries out the reaction cytidine(32) in tRNA + S-sulfanyl-L-cysteinyl-[cysteine desulfurase] + AH2 + ATP = 2-thiocytidine(32) in tRNA + L-cysteinyl-[cysteine desulfurase] + A + AMP + diphosphate + H(+). The protein operates within tRNA modification. Its function is as follows. Catalyzes the ATP-dependent 2-thiolation of cytidine in position 32 of tRNA, to form 2-thiocytidine (s(2)C32). The sulfur atoms are provided by the cysteine/cysteine desulfurase (IscS) system. This Haemophilus influenzae (strain PittEE) protein is tRNA-cytidine(32) 2-sulfurtransferase.